Reading from the N-terminus, the 465-residue chain is Endo-1,3-1,4-beta-glycanase EglC (465 aa).

Hemolysin-type calcium-binding repeat units lie at residues 33 to 50 (YGTAGNDSMWADSSVDVT), 105 to 122 (FGNSASNIISGGSGSQTI), and 123 to 140 (NGGAGNDVLTGAGGADTF). Residues 213–462 (LDRSVLTQTF…YVKAYSLDAD (250 aa)) form the GH16 domain. Glu349 acts as the Nucleophile in catalysis. Catalysis depends on Glu354, which acts as the Proton donor.

Belongs to the glycosyl hydrolase 16 family.

Its subcellular location is the secreted. The protein operates within glycan metabolism; exopolysaccharide biosynthesis. Its function is as follows. Cleaves high molecular weight succinoglycan to yield LMW succinoglycan. Dynamically regulates the molecular weight distribution of succinoglycan by cleaving nascent succinoglycan only during a limited period after its synthesis, perhaps before it undergoes a time-dependent change in its conformation or aggregation state. In Rhizobium meliloti (strain 1021) (Ensifer meliloti), this protein is Endo-1,3-1,4-beta-glycanase EglC (eglC).